Consider the following 506-residue polypeptide: GMP synthase [glutamine-hydrolyzing] (506 aa).

The region spanning 2–190 (SIVILDFGSQ…FLDICGVTRD (189 aa)) is the Glutamine amidotransferase type-1 domain. The Nucleophile role is filled by Cys-79. Active-site residues include His-165 and Glu-167. The GMPS ATP-PPase domain occupies 191–381 (WNAEHIVDEL…LGLPDHIRMR (191 aa)). An ATP-binding site is contributed by 219–225 (SGGVDSS).

In terms of assembly, homodimer.

The catalysed reaction is XMP + L-glutamine + ATP + H2O = GMP + L-glutamate + AMP + diphosphate + 2 H(+). The protein operates within purine metabolism; GMP biosynthesis; GMP from XMP (L-Gln route): step 1/1. Its function is as follows. Catalyzes the synthesis of GMP from XMP. In Deinococcus radiodurans (strain ATCC 13939 / DSM 20539 / JCM 16871 / CCUG 27074 / LMG 4051 / NBRC 15346 / NCIMB 9279 / VKM B-1422 / R1), this protein is GMP synthase [glutamine-hydrolyzing] (guaA).